The primary structure comprises 922 residues: Isoleucine--tRNA ligase (922 aa).

The 'HIGH' region signature appears at proline 58–histidine 68. An L-isoleucyl-5'-AMP-binding site is contributed by glutamate 552. The 'KMSKS' region signature appears at lysine 593 to serine 597. Lysine 596 contacts ATP. The Zn(2+) site is built by cysteine 885, cysteine 888, cysteine 905, and cysteine 908.

Belongs to the class-I aminoacyl-tRNA synthetase family. IleS type 1 subfamily. Monomer. Requires Zn(2+) as cofactor.

Its subcellular location is the cytoplasm. The catalysed reaction is tRNA(Ile) + L-isoleucine + ATP = L-isoleucyl-tRNA(Ile) + AMP + diphosphate. Its function is as follows. Catalyzes the attachment of isoleucine to tRNA(Ile). As IleRS can inadvertently accommodate and process structurally similar amino acids such as valine, to avoid such errors it has two additional distinct tRNA(Ile)-dependent editing activities. One activity is designated as 'pretransfer' editing and involves the hydrolysis of activated Val-AMP. The other activity is designated 'posttransfer' editing and involves deacylation of mischarged Val-tRNA(Ile). In Ruthia magnifica subsp. Calyptogena magnifica, this protein is Isoleucine--tRNA ligase.